Reading from the N-terminus, the 130-residue chain is Small ribosomal subunit protein uS9 (130 aa).

Residues 99–110 show a composition bias toward basic and acidic residues; that stretch reads KKAGFLTRDPRM. Residues 99 to 130 are disordered; the sequence is KKAGFLTRDPRMKERKKYGLKKARRAPQFSKR. A compositionally biased stretch (basic residues) spans 111-130; it reads KERKKYGLKKARRAPQFSKR.

The protein belongs to the universal ribosomal protein uS9 family.

This chain is Small ribosomal subunit protein uS9, found in Clostridium botulinum (strain Eklund 17B / Type B).